A 207-amino-acid polypeptide reads, in one-letter code: uncharacterized protein (207 aa).

Residues 14 to 201 (ARLINQAVEI…SPVILREGSG (188 aa)) enclose the YrdC-like domain.

The protein belongs to the SUA5 family.

This is an uncharacterized protein from Haemophilus influenzae (strain ATCC 51907 / DSM 11121 / KW20 / Rd).